A 327-amino-acid chain; its full sequence is Sphingomyelin synthase-related 2 (327 aa).

The next 5 membrane-spanning stretches (helical) occupy residues 54 to 74, 99 to 119, 131 to 151, 192 to 212, and 220 to 240; these read LLAT…LAWV, AIRI…LVMF, VFFC…IFQV, LCGD…FLVF, and LQPL…SILL. His-201 is a catalytic residue. Residues 241 to 327 lie on the Cytoplasmic side of the membrane; sequence ARKHYMIDIV…TLKKSRRSFE (87 aa). Active-site residues include His-244 and Asp-248.

Belongs to the sphingomyelin synthase family.

The protein localises to the membrane. This Caenorhabditis elegans protein is Sphingomyelin synthase-related 2.